The chain runs to 576 residues: Adenine deaminase (576 aa).

The protein belongs to the metallo-dependent hydrolases superfamily. Adenine deaminase family. Mn(2+) serves as cofactor.

The catalysed reaction is adenine + H2O + H(+) = hypoxanthine + NH4(+). The polypeptide is Adenine deaminase (Syntrophobacter fumaroxidans (strain DSM 10017 / MPOB)).